The chain runs to 157 residues: NADPH-dependent 7-cyano-7-deazaguanine reductase (157 aa).

Cysteine 55 serves as the catalytic Thioimide intermediate. The Proton donor role is filled by aspartate 62. Substrate contacts are provided by residues 77–79 and 96–97; these read VES and HE.

The protein belongs to the GTP cyclohydrolase I family. QueF type 1 subfamily.

It localises to the cytoplasm. The catalysed reaction is 7-aminomethyl-7-carbaguanine + 2 NADP(+) = 7-cyano-7-deazaguanine + 2 NADPH + 3 H(+). The protein operates within tRNA modification; tRNA-queuosine biosynthesis. Functionally, catalyzes the NADPH-dependent reduction of 7-cyano-7-deazaguanine (preQ0) to 7-aminomethyl-7-deazaguanine (preQ1). This is NADPH-dependent 7-cyano-7-deazaguanine reductase from Neisseria meningitidis serogroup A / serotype 4A (strain DSM 15465 / Z2491).